The primary structure comprises 482 residues: tRNA sulfurtransferase (482 aa).

Positions 61–165 (DLVRDALTRI…DDRLLLVRGR (105 aa)) constitute a THUMP domain. ATP contacts are provided by residues 183-184 (LI), Lys-265, Gly-287, and Gln-296. A disulfide bridge connects residues Cys-344 and Cys-456. The 79-residue stretch at 404-482 (LAEGDVVLDI…GYDNVRVYRP (79 aa)) folds into the Rhodanese domain. Cys-456 serves as the catalytic Cysteine persulfide intermediate.

Belongs to the ThiI family.

It is found in the cytoplasm. It carries out the reaction [ThiI sulfur-carrier protein]-S-sulfanyl-L-cysteine + a uridine in tRNA + 2 reduced [2Fe-2S]-[ferredoxin] + ATP + H(+) = [ThiI sulfur-carrier protein]-L-cysteine + a 4-thiouridine in tRNA + 2 oxidized [2Fe-2S]-[ferredoxin] + AMP + diphosphate. The enzyme catalyses [ThiS sulfur-carrier protein]-C-terminal Gly-Gly-AMP + S-sulfanyl-L-cysteinyl-[cysteine desulfurase] + AH2 = [ThiS sulfur-carrier protein]-C-terminal-Gly-aminoethanethioate + L-cysteinyl-[cysteine desulfurase] + A + AMP + 2 H(+). It participates in cofactor biosynthesis; thiamine diphosphate biosynthesis. In terms of biological role, catalyzes the ATP-dependent transfer of a sulfur to tRNA to produce 4-thiouridine in position 8 of tRNAs, which functions as a near-UV photosensor. Also catalyzes the transfer of sulfur to the sulfur carrier protein ThiS, forming ThiS-thiocarboxylate. This is a step in the synthesis of thiazole, in the thiamine biosynthesis pathway. The sulfur is donated as persulfide by IscS. The sequence is that of tRNA sulfurtransferase from Edwardsiella ictaluri (strain 93-146).